The primary structure comprises 452 residues: Phosphoglucosamine mutase (452 aa).

Residue S103 is the Phosphoserine intermediate of the active site. S103, D244, D246, and D248 together coordinate Mg(2+). S103 bears the Phosphoserine mark.

This sequence belongs to the phosphohexose mutase family. It depends on Mg(2+) as a cofactor. Post-translationally, activated by phosphorylation.

It carries out the reaction alpha-D-glucosamine 1-phosphate = D-glucosamine 6-phosphate. In terms of biological role, catalyzes the conversion of glucosamine-6-phosphate to glucosamine-1-phosphate. In Fusobacterium nucleatum subsp. nucleatum (strain ATCC 25586 / DSM 15643 / BCRC 10681 / CIP 101130 / JCM 8532 / KCTC 2640 / LMG 13131 / VPI 4355), this protein is Phosphoglucosamine mutase.